A 184-amino-acid polypeptide reads, in one-letter code: Ribosome maturation factor RimM (184 aa).

The PRC barrel domain occupies 101 to 180; sequence EGEFFYCDLV…KITTHNAKTL (80 aa).

The protein belongs to the RimM family. In terms of assembly, binds ribosomal protein uS19.

It localises to the cytoplasm. In terms of biological role, an accessory protein needed during the final step in the assembly of 30S ribosomal subunit, possibly for assembly of the head region. Essential for efficient processing of 16S rRNA. May be needed both before and after RbfA during the maturation of 16S rRNA. It has affinity for free ribosomal 30S subunits but not for 70S ribosomes. This Helicobacter pylori (strain ATCC 700392 / 26695) (Campylobacter pylori) protein is Ribosome maturation factor RimM.